We begin with the raw amino-acid sequence, 178 residues long: Caveolin-1 (178 aa).

An N-acetylserine modification is found at S2. At S2 the chain carries Phosphoserine. A required for homooligomerization region spans residues 2–94 (SGGKYVDSEG…WKASFTTFTV (93 aa)). At 2 to 104 (SGGKYVDSEG…TKYWFYRLLS (103 aa)) the chain is on the cytoplasmic side. The residue at position 5 (K5) is an N6-acetyllysine; alternate. K5 participates in a covalent cross-link: Glycyl lysine isopeptide (Lys-Gly) (interchain with G-Cter in ubiquitin); alternate. The residue at position 6 (Y6) is a Phosphotyrosine. S9 carries the phosphoserine modification. A Phosphotyrosine; by ABL1 modification is found at Y14. Y25 bears the Phosphotyrosine mark. Glycyl lysine isopeptide (Lys-Gly) (interchain with G-Cter in ubiquitin) cross-links involve residues K26 and K30. S37 carries the post-translational modification Phosphoserine. Glycyl lysine isopeptide (Lys-Gly) (interchain with G-Cter in ubiquitin) cross-links involve residues K39, K47, and K57. The tract at residues 82–94 (DGIWKASFTTFTV) is interaction with CAVIN3. Positions 105-125 (ALFGIPMALIWGIYFAILSFL) form an intramembrane region, helical. Over 126–178 (HIWAVVPCIKSFLIEIQCISRVYSIYIHTVCDPLFEAIGKIFSNVRISLQKEI) the chain is Cytoplasmic. Positions 131 to 142 (VPCIKSFLIEIQ) are interacts with SPRY1, SPRY2, SPRY3 and SPRY4. Residues C133, C143, and C156 are each lipidated (S-palmitoyl cysteine). The interval 149–160 (SIYIHTVCDPLF) is interacts with SPRY1, SPRY2, and SPRY4. The segment at 167 to 178 (FSNVRISLQKEI) is interacts with SPRY1, SPRY2, SPRY3 and SPRY4.

It belongs to the caveolin family. Homooligomer. Interacts with GLIPR2. Interacts with NOSTRIN. Interacts with SNAP25 and STX1A. Interacts (via the N-terminus) with DPP4; the interaction is direct. Interacts with CTNNB1, CDH1 and JUP. Interacts with PACSIN2; this interaction induces membrane tubulation. Interacts with SLC7A9. Interacts with BMX and BTK. Interacts with TGFBR1. Interacts with CAVIN3 (via leucine-zipper domain) in a cholesterol-sensitive manner. Interacts with CAVIN1. Interacts with EHD2 in a cholesterol-dependent manner. Forms a ternary complex with UBXN6 and VCP; mediates CAV1 targeting to lysosomes for degradation. Interacts with ABCG1; this interaction regulates ABCG1-mediated cholesterol efflux. Interacts with NEU3; this interaction enhances NEU3 sialidase activity within caveola. Interacts (via C-terminus) with SPRY1, SPRY2 (via C-terminus), SPRY3, and SPRY4. Interacts with IGFBP5; this interaction allows trafficking of IGFBP5 from the plasma membrane to the nucleus. In terms of processing, phosphorylated at Tyr-14 by ABL1 in response to oxidative stress. Post-translationally, ubiquitinated. Undergo monoubiquitination and multi- and/or polyubiquitination. Monoubiquitination of N-terminal lysines promotes integration in a ternary complex with UBXN6 and VCP which promotes oligomeric CAV1 targeting to lysosomes for degradation. Ubiquitinated by ZNRF1; leading to degradation and modulation of the TLR4-mediated immune response.

The protein resides in the golgi apparatus membrane. It is found in the cell membrane. The protein localises to the membrane. Its subcellular location is the caveola. It localises to the membrane raft. Its function is as follows. May act as a scaffolding protein within caveolar membranes. Forms a stable heterooligomeric complex with CAV2 that targets to lipid rafts and drives caveolae formation. Mediates the recruitment of CAVIN proteins (CAVIN1/2/3/4) to the caveolae. Interacts directly with G-protein alpha subunits and can functionally regulate their activity. Involved in the costimulatory signal essential for T-cell receptor (TCR)-mediated T-cell activation. Its binding to DPP4 induces T-cell proliferation and NF-kappa-B activation in a T-cell receptor/CD3-dependent manner. Recruits CTNNB1 to caveolar membranes and may regulate CTNNB1-mediated signaling through the Wnt pathway. Negatively regulates TGFB1-mediated activation of SMAD2/3 by mediating the internalization of TGFBR1 from membrane rafts leading to its subsequent degradation. Binds 20(S)-hydroxycholesterol (20(S)-OHC). In Aotus nancymaae (Ma's night monkey), this protein is Caveolin-1 (CAV1).